Here is a 295-residue protein sequence, read N- to C-terminus: Mycothiol acetyltransferase (295 aa).

Residue Glu-30 coordinates 1D-myo-inositol 2-(L-cysteinylamino)-2-deoxy-alpha-D-glucopyranoside. Leu-62–Val-64 lines the acetyl-CoA pocket. In terms of domain architecture, N-acetyltransferase spans Val-137–Arg-295. Glu-165, Lys-209, and Glu-227 together coordinate 1D-myo-inositol 2-(L-cysteinylamino)-2-deoxy-alpha-D-glucopyranoside. Acetyl-CoA contacts are provided by residues Val-231 to Ile-233 and Gln-238 to Lys-244. A 1D-myo-inositol 2-(L-cysteinylamino)-2-deoxy-alpha-D-glucopyranoside-binding site is contributed by Tyr-265.

The protein belongs to the acetyltransferase family. MshD subfamily. In terms of assembly, monomer.

It catalyses the reaction 1D-myo-inositol 2-(L-cysteinylamino)-2-deoxy-alpha-D-glucopyranoside + acetyl-CoA = mycothiol + CoA + H(+). In terms of biological role, catalyzes the transfer of acetyl from acetyl-CoA to desacetylmycothiol (Cys-GlcN-Ins) to form mycothiol. This Nocardioides sp. (strain ATCC BAA-499 / JS614) protein is Mycothiol acetyltransferase.